A 475-amino-acid chain; its full sequence is Beta-amyrin 28-monooxygenase (475 aa).

The chain crosses the membrane as a helical span at residues 2 to 22 (YLTILFLFVSSILLSLMFLLR). Cys-422 contributes to the heme binding site.

The protein belongs to the cytochrome P450 family. The cofactor is heme.

The protein localises to the membrane. The enzyme catalyses beta-amyrin + 3 reduced [NADPH--hemoprotein reductase] + 3 O2 = oleanolate + 3 oxidized [NADPH--hemoprotein reductase] + 4 H2O + 4 H(+). In terms of biological role, catalyzes the oxidation of the methyl group to a carboxyl group at the C-28 position of beta-amyrin to form oleanolate. The protein is Beta-amyrin 28-monooxygenase of Barbarea vulgaris (Yellow rocket).